The sequence spans 399 residues: MSDQLILVLNCGSSSLKGAVIDRKSGSVVLSCLGERLTTPEAVITFNKDGNKRQVPLSGRNCHAGAVGMLLNELEKHGLHDRIKAIGHRIAHGGEKYSESVLIDQAVMDELNACIPLAPLHNPANISGILAAQEHFPGLPNVGVMDTSFHQTMPERAYTYAVPRELRKKYAFRRYGFHGTSMRYVAPEAARILGKPLEDIRMIIAHLGNGASITAIKNGKSVDTSMGFTPIEGLVMGTRCGDIDPGVYSYLTSHAGMDVAQVDEMLNKKSGLLGISELSNDCRTLEIAADEGHEGARLALEVMTYRLAKYIASMAVGCGGVDALVFTGGIGENSRNIRAKTVSYLDFLGLHIDTKANMEKRYGNSGIISPTDSSPAVLVVPTNEELMIACDTAELAGIL.

Asn10 contributes to the Mg(2+) binding site. Residue Lys17 coordinates ATP. Position 89 (Arg89) interacts with substrate. The active-site Proton donor/acceptor is the Asp146. ATP contacts are provided by residues His206 to Gly210, Asp281 to Arg283, and Gly329 to Asn333. Glu384 is a binding site for Mg(2+).

This sequence belongs to the acetokinase family. In terms of assembly, homodimer. It depends on Mg(2+) as a cofactor. Mn(2+) serves as cofactor.

The protein localises to the cytoplasm. The enzyme catalyses acetate + ATP = acetyl phosphate + ADP. The protein operates within metabolic intermediate biosynthesis; acetyl-CoA biosynthesis; acetyl-CoA from acetate: step 1/2. Its function is as follows. Catalyzes the formation of acetyl phosphate from acetate and ATP. Can also catalyze the reverse reaction. The protein is Acetate kinase 2 of Neisseria meningitidis serogroup B (strain ATCC BAA-335 / MC58).